Reading from the N-terminus, the 74-residue chain is U4-theraphotoxin-Cg1a (74 aa).

An N-terminal signal peptide occupies residues 1–19; sequence MNATIFALLLLLNLAMYNA. Residues 20–39 constitute a propeptide that is removed on maturation; it reads AEQSSETDMDDTLLIPEINR. 3 disulfide bridges follow: Cys-42–Cys-56, Cys-49–Cys-61, and Cys-55–Cys-71.

The protein belongs to the neurotoxin 36 family. 01 subfamily. Expressed by the venom gland.

Its subcellular location is the secreted. Its function is as follows. Probable ion channel inhibitor. This Chilobrachys guangxiensis (Chinese earth tiger tarantula) protein is U4-theraphotoxin-Cg1a.